The primary structure comprises 248 residues: Peptidyl-prolyl cis-trans isomerase, chloroplastic (248 aa).

A PPIase cyclophilin-type domain is found at Phe-85 to Glu-243. Residues Gln-223 to Gly-248 form a disordered region.

The protein belongs to the cyclophilin-type PPIase family. In terms of tissue distribution, highly expressed in leaf.

It localises to the plastid. The protein resides in the chloroplast stroma. It carries out the reaction [protein]-peptidylproline (omega=180) = [protein]-peptidylproline (omega=0). With respect to regulation, binds cyclosporin A (CsA). CsA mediates some of its effects via an inhibitory action on PPIase. In terms of biological role, PPIases accelerate the folding of proteins. It catalyzes the cis-trans isomerization of proline imidic peptide bonds in oligopeptides. This Vicia faba (Broad bean) protein is Peptidyl-prolyl cis-trans isomerase, chloroplastic.